The primary structure comprises 166 residues: ATP synthase subunit b (166 aa).

The helical transmembrane segment at 7-27 (QFSLGLFILQIILFVGLILLL) threads the bilayer.

It belongs to the ATPase B chain family. F-type ATPases have 2 components, F(1) - the catalytic core - and F(0) - the membrane proton channel. F(1) has five subunits: alpha(3), beta(3), gamma(1), delta(1), epsilon(1). F(0) has three main subunits: a(1), b(2) and c(10-14). The alpha and beta chains form an alternating ring which encloses part of the gamma chain. F(1) is attached to F(0) by a central stalk formed by the gamma and epsilon chains, while a peripheral stalk is formed by the delta and b chains.

Its subcellular location is the cell inner membrane. Functionally, f(1)F(0) ATP synthase produces ATP from ADP in the presence of a proton or sodium gradient. F-type ATPases consist of two structural domains, F(1) containing the extramembraneous catalytic core and F(0) containing the membrane proton channel, linked together by a central stalk and a peripheral stalk. During catalysis, ATP synthesis in the catalytic domain of F(1) is coupled via a rotary mechanism of the central stalk subunits to proton translocation. In terms of biological role, component of the F(0) channel, it forms part of the peripheral stalk, linking F(1) to F(0). The protein is ATP synthase subunit b of Flavobacterium psychrophilum (strain ATCC 49511 / DSM 21280 / CIP 103535 / JIP02/86).